The sequence spans 217 residues: Adenylate kinase (217 aa).

10–15 (GAGKGT) contacts ATP. Residues 30-59 (STGDMLRAAVKAGTPLGIEAKKVMDAGGLV) are NMP. AMP is bound by residues Thr-31, Arg-36, 57–59 (GLV), 85–88 (GFPR), and Gln-92. The segment at 122 to 159 (GRRAHLASGRTYHVKYNPPKVEGKDDVTGEDLVQRDDD) is LID. Residues Arg-123 and 132 to 133 (TY) contribute to the ATP site. Residues Arg-156 and Arg-167 each contribute to the AMP site. Gly-203 provides a ligand contact to ATP.

It belongs to the adenylate kinase family. As to quaternary structure, monomer.

It is found in the cytoplasm. The catalysed reaction is AMP + ATP = 2 ADP. It participates in purine metabolism; AMP biosynthesis via salvage pathway; AMP from ADP: step 1/1. In terms of biological role, catalyzes the reversible transfer of the terminal phosphate group between ATP and AMP. Plays an important role in cellular energy homeostasis and in adenine nucleotide metabolism. This chain is Adenylate kinase, found in Azoarcus sp. (strain BH72).